The chain runs to 242 residues: Biosynthetic peptidoglycan transglycosylase (242 aa).

Residues 19-39 form a helical membrane-spanning segment; it reads LMVVLAVFWGGGIALFSVAPV.

The protein belongs to the glycosyltransferase 51 family.

The protein localises to the cell inner membrane. The catalysed reaction is [GlcNAc-(1-&gt;4)-Mur2Ac(oyl-L-Ala-gamma-D-Glu-L-Lys-D-Ala-D-Ala)](n)-di-trans,octa-cis-undecaprenyl diphosphate + beta-D-GlcNAc-(1-&gt;4)-Mur2Ac(oyl-L-Ala-gamma-D-Glu-L-Lys-D-Ala-D-Ala)-di-trans,octa-cis-undecaprenyl diphosphate = [GlcNAc-(1-&gt;4)-Mur2Ac(oyl-L-Ala-gamma-D-Glu-L-Lys-D-Ala-D-Ala)](n+1)-di-trans,octa-cis-undecaprenyl diphosphate + di-trans,octa-cis-undecaprenyl diphosphate + H(+). The protein operates within cell wall biogenesis; peptidoglycan biosynthesis. Functionally, peptidoglycan polymerase that catalyzes glycan chain elongation from lipid-linked precursors. This is Biosynthetic peptidoglycan transglycosylase from Escherichia coli (strain ATCC 8739 / DSM 1576 / NBRC 3972 / NCIMB 8545 / WDCM 00012 / Crooks).